Here is a 421-residue protein sequence, read N- to C-terminus: D-amino-acid oxidase (421 aa).

FAD-binding residues include Ala12, Gly13, Ala14, Val15, Gly47, Gly64, Ile65, Lys225, Ala226, Arg359, Gly385, Gly388, and Leu389. D-proline is bound at residue Arg359. Arg359 provides a ligand contact to D-serine.

It belongs to the DAMOX/DASOX family. The cofactor is FAD.

Its subcellular location is the cytoplasm. The protein resides in the secreted. It is found in the cell wall. The catalysed reaction is a D-alpha-amino acid + O2 + H2O = a 2-oxocarboxylate + H2O2 + NH4(+). Its function is as follows. Catalyzes the oxidative deamination of D-amino acids with broad substrate specificity. The polypeptide is D-amino-acid oxidase (Bradyrhizobium diazoefficiens (strain JCM 10833 / BCRC 13528 / IAM 13628 / NBRC 14792 / USDA 110)).